The following is a 97-amino-acid chain: UPF0235 protein cbdbA1230 (97 aa).

This sequence belongs to the UPF0235 family.

The polypeptide is UPF0235 protein cbdbA1230 (Dehalococcoides mccartyi (strain CBDB1)).